A 398-amino-acid chain; its full sequence is Phosphomevalonate dehydratase large subunit (398 aa).

Glycine 48, valine 49, serine 50, asparagine 76, and proline 77 together coordinate (R)-5-phosphomevalonate. Cysteine 116 is a [4Fe-4S] cluster binding site. (R)-5-phosphomevalonate is bound by residues glutamate 136 and serine 137. Residues cysteine 287 and cysteine 342 each contribute to the [4Fe-4S] cluster site. Residue lysine 361 coordinates (R)-5-phosphomevalonate.

This sequence belongs to the AcnX type II large subunit family. As to quaternary structure, heterodimer composed of a large subunit (PMDh-L) and a small subunit (PMDh-S). The cofactor is [4Fe-4S] cluster.

The catalysed reaction is (R)-5-phosphomevalonate = (2E)-3-methyl-5-phosphooxypent-2-enoate + H2O. It participates in isoprenoid biosynthesis; isopentenyl diphosphate biosynthesis via mevalonate pathway. Component of a hydro-lyase that catalyzes the dehydration of mevalonate 5-phosphate (MVA5P) to form trans-anhydromevalonate 5-phosphate (tAHMP). Involved in the archaeal mevalonate (MVA) pathway, which provides fundamental precursors for isoprenoid biosynthesis, such as isopentenyl diphosphate (IPP) and dimethylallyl diphosphate (DMAPP). This is Phosphomevalonate dehydratase large subunit from Methanosarcina mazei (strain ATCC BAA-159 / DSM 3647 / Goe1 / Go1 / JCM 11833 / OCM 88) (Methanosarcina frisia).